Consider the following 253-residue polypeptide: uncharacterized protein (253 aa).

6 to 30 (IITASDSGIGKECALLLAQQGFDIG) provides a ligand contact to NADP(+). S140 contacts substrate. Catalysis depends on Y153, which acts as the Proton acceptor.

It belongs to the short-chain dehydrogenases/reductases (SDR) family.

This is an uncharacterized protein from Escherichia coli (strain K12).